Here is a 236-residue protein sequence, read N- to C-terminus: Small ribosomal subunit protein eS6 (236 aa).

Belongs to the eukaryotic ribosomal protein eS6 family. In terms of assembly, component of the small ribosomal subunit. Mature ribosomes consist of a small (40S) and a large (60S) subunit. The 40S subunit contains about 32 different proteins and 1 molecule of RNA (18S). The 60S subunit contains 45 different proteins and 3 molecules of RNA (25S, 5.8S and 5S).

It is found in the cytoplasm. Component of the ribosome, a large ribonucleoprotein complex responsible for the synthesis of proteins in the cell. The small ribosomal subunit (SSU) binds messenger RNAs (mRNAs) and translates the encoded message by selecting cognate aminoacyl-transfer RNA (tRNA) molecules. The large subunit (LSU) contains the ribosomal catalytic site termed the peptidyl transferase center (PTC), which catalyzes the formation of peptide bonds, thereby polymerizing the amino acids delivered by tRNAs into a polypeptide chain. The nascent polypeptides leave the ribosome through a tunnel in the LSU and interact with protein factors that function in enzymatic processing, targeting, and the membrane insertion of nascent chains at the exit of the ribosomal tunnel. RPS6A is involved in nucleolar processing of pre-18S ribosomal RNA and ribosome assembly. The sequence is that of Small ribosomal subunit protein eS6 (RPS6A) from Candida albicans (strain SC5314 / ATCC MYA-2876) (Yeast).